Here is a 592-residue protein sequence, read N- to C-terminus: MGEALKGLKRTIMCGQLREENINEQHTVMGWVQRKRNLGGLIFIDLRDRDGILQVVFGEEINKEAFEKADTVRSEYCLAVTGKIIKRQAVNENLPTGIVELQGESIKILSESETPPIYIKEDLDAAENIRLKYRYLDLRRPDMQKILKIRHKTAKAVRDFLDKEEFLEVETPMLTKSTPEGARDYLVPSRNYPGMFYALPQSPQLFKQLLMVSGFDKYFQIVKCFRDEDLRANRQPEFTQIDLEMSFVEMDDVIDLNERLIQYVFKNVVGKDIKLPIERMPYKIAMSKYGSDKPDLRFGMEIENLDDVLKETSFKVFKEVIDNGGTVSAIKAENCAGMGRKQIDKLGDFVKTFKAKGLAWIAYKEDEIKSPIAKFLTEEELKSIIDKMDAKVGDLILIVSDAKEKVVQQSLGQLRLHLAKELGLLKDNDELRFVWVTEFPLVSYNEEEDRWEAEHHPFTAPMDEDIQYLDTDPGKVRAKAYDIVLNGEELGGGSIRIHDTKLQEKMFEVLGFTEEKAWERFGFLLEAFKFGPPPHGGLAFGFDRMIMFLSGTENIKDVIAFPKNQNAFCPMTEAPNVVDEVQLDELGIKIKK.

Position 180 (glutamate 180) interacts with L-aspartate. The aspartate stretch occupies residues 204 to 207; that stretch reads QLFK. Arginine 226 lines the L-aspartate pocket. ATP contacts are provided by residues 226–228 and glutamine 235; that span reads RDE. Histidine 455 contacts L-aspartate. Residue glutamate 489 coordinates ATP. Arginine 496 contacts L-aspartate. ATP is bound at residue 541-544; the sequence is GFDR.

The protein belongs to the class-II aminoacyl-tRNA synthetase family. Type 1 subfamily. Homodimer.

It localises to the cytoplasm. The catalysed reaction is tRNA(Asp) + L-aspartate + ATP = L-aspartyl-tRNA(Asp) + AMP + diphosphate. Functionally, catalyzes the attachment of L-aspartate to tRNA(Asp) in a two-step reaction: L-aspartate is first activated by ATP to form Asp-AMP and then transferred to the acceptor end of tRNA(Asp). This chain is Aspartate--tRNA ligase, found in Clostridium tetani (strain Massachusetts / E88).